We begin with the raw amino-acid sequence, 487 residues long: Histamine H1 receptor (487 aa).

Residues 1 to 29 lie on the Extracellular side of the membrane; sequence MSLPNSSCLLEDKMCEGNKTTMASPQLMP. 2 N-linked (GlcNAc...) asparagine glycosylation sites follow: Asn-5 and Asn-18. Residues 30–50 form a helical membrane-spanning segment; that stretch reads LVVVLSTICLVTVGLNLLVLY. Over 51 to 64 the chain is Cytoplasmic; it reads AVRSERKLHTVGNL. A helical transmembrane segment spans residues 65–89; that stretch reads YIVSLSVADLIVGAVVMPMNILYLL. Residues 90–97 are Extracellular-facing; it reads MSKWSLGR. A helical transmembrane segment spans residues 98–123; that stretch reads PLCLFWLSMDYVASTASIFSVFILCI. A disulfide bridge links Cys-100 with Cys-180. Asp-107 and Thr-112 together coordinate histamine. An important for agonist binding region spans residues 107–112; it reads DYVAST. Over 124 to 144 the chain is Cytoplasmic; the sequence is DRYRSVQQPLRYLKYRTKTRA. Phosphothreonine occurs at positions 140 and 142. Residues 145–164 form a helical membrane-spanning segment; it reads SATILGAWFLSFLWVIPILG. Residues 165–188 lie on the Extracellular side of the membrane; that stretch reads WNHFMQQTSVRREDKCETDFYDVT. The helical transmembrane segment at 189-211 threads the bilayer; sequence WFKVMTAIINFYLPTLLMLWFYA. Asn-198 is a binding site for histamine. Over 212-416 the chain is Cytoplasmic; the sequence is KIYKAVRQHC…MNRERKAAKQ (205 aa). Position 230 is a phosphoserine (Ser-230). Residues 238 to 261 are compositionally biased toward basic and acidic residues; the sequence is KLRPENPKGDAKKPGKESPWEVLK. The segment at 238–292 is disordered; it reads KLRPENPKGDAKKPGKESPWEVLKRKPKDAGGGSVLKSPSQTXKEMKSPVVFSQE. Thr-279 is subject to Phosphothreonine. Phosphoserine occurs at positions 344 and 347. A disordered region spans residues 345–379; it reads EISEDQMLGDSQSFSRTDSDTTTETAPGKGKLRSG. Over residues 353 to 369 the composition is skewed to polar residues; that stretch reads GDSQSFSRTDSDTTTET. 3 positions are modified to phosphoserine: Ser-380, Ser-396, and Ser-398. A helical membrane pass occupies residues 417 to 440; it reads LGFIMAAFILCWIPYFIFFMVIAF. Residues 424–428 are important for agonist binding; sequence FILCW. Position 431 (Tyr-431) interacts with histamine. A disulfide bond links Cys-441 and Cys-444. Over 441–446 the chain is Extracellular; the sequence is CKNCCN. The chain crosses the membrane as a helical span at residues 447 to 469; sequence EHLHMFTIWLGYINSTLNPLIYP. Over 470 to 487 the chain is Cytoplasmic; that stretch reads LCNENFKKTFKRILHIRS.

The protein belongs to the G-protein coupled receptor 1 family. In terms of processing, phosphorylation at sites in the second and third cytoplasmic loops independently contribute to agonist-induced receptor down-regulation.

It is found in the cell membrane. G-protein-coupled receptor for histamine, a biogenic amine that functions as an immune modulator and a neurotransmitter. Through the H1 receptor, histamine mediates the contraction of smooth muscles and increases capillary permeability due to contraction of terminal venules. Also mediates neurotransmission in the central nervous system and thereby regulates circadian rhythms, emotional and locomotor activities as well as cognitive functions. In Pan troglodytes (Chimpanzee), this protein is Histamine H1 receptor.